The following is a 432-amino-acid chain: Adenylosuccinate synthetase (432 aa).

GTP-binding positions include 11 to 17 (GDEGKGK) and 39 to 41 (GHT). Residue D12 is the Proton acceptor of the active site. Residues D12 and G39 each coordinate Mg(2+). IMP-binding positions include 12–15 (DEGK), 37–40 (NAGH), T134, R148, N230, T245, and R309. The active-site Proton donor is the H40. 305-311 (VTTGRKR) is a substrate binding site. Residues R311, 337–339 (KLD), and 419–421 (GTG) contribute to the GTP site.

This sequence belongs to the adenylosuccinate synthetase family. In terms of assembly, homodimer. Mg(2+) is required as a cofactor.

It is found in the cytoplasm. It carries out the reaction IMP + L-aspartate + GTP = N(6)-(1,2-dicarboxyethyl)-AMP + GDP + phosphate + 2 H(+). It functions in the pathway purine metabolism; AMP biosynthesis via de novo pathway; AMP from IMP: step 1/2. Plays an important role in the de novo pathway and in the salvage pathway of purine nucleotide biosynthesis. Catalyzes the first committed step in the biosynthesis of AMP from IMP. The protein is Adenylosuccinate synthetase of Vanderwaltozyma polyspora (strain ATCC 22028 / DSM 70294 / BCRC 21397 / CBS 2163 / NBRC 10782 / NRRL Y-8283 / UCD 57-17) (Kluyveromyces polysporus).